Here is an 89-residue protein sequence, read N- to C-terminus: Small ribosomal subunit protein uS15 (89 aa).

This sequence belongs to the universal ribosomal protein uS15 family. In terms of assembly, part of the 30S ribosomal subunit. Forms a bridge to the 50S subunit in the 70S ribosome, contacting the 23S rRNA.

Its function is as follows. One of the primary rRNA binding proteins, it binds directly to 16S rRNA where it helps nucleate assembly of the platform of the 30S subunit by binding and bridging several RNA helices of the 16S rRNA. Functionally, forms an intersubunit bridge (bridge B4) with the 23S rRNA of the 50S subunit in the ribosome. The polypeptide is Small ribosomal subunit protein uS15 (Thermobifida fusca (strain YX)).